Reading from the N-terminus, the 26-residue chain is Hainantoxin F1-31.97 (26 aa).

Intrachain disulfides connect Cys-2–Cys-16 and Cys-9–Cys-21.

This sequence belongs to the neurotoxin 10 (Hwtx-1) family. 17 (Hntx-9) subfamily. As to expression, expressed by the venom gland.

Its subcellular location is the secreted. Functionally, ion channel inhibitor. The sequence is that of Hainantoxin F1-31.97 from Cyriopagopus hainanus (Chinese bird spider).